Here is a 466-residue protein sequence, read N- to C-terminus: 23S rRNA (uracil(1939)-C(5))-methyltransferase RlmD (466 aa).

One can recognise a TRAM domain in the interval 11–69 (KITDTKHKEIVINRLDHLGAGIGHLNNKSIFVDGLLPGEKALVQITDDKKQYARAKVIK). [4Fe-4S] cluster is bound by residues cysteine 82, cysteine 88, cysteine 91, and cysteine 184. S-adenosyl-L-methionine contacts are provided by glutamine 287, phenylalanine 316, asparagine 321, glutamate 337, asparagine 364, and aspartate 385. Cysteine 411 functions as the Nucleophile in the catalytic mechanism.

This sequence belongs to the class I-like SAM-binding methyltransferase superfamily. RNA M5U methyltransferase family. RlmD subfamily.

The enzyme catalyses uridine(1939) in 23S rRNA + S-adenosyl-L-methionine = 5-methyluridine(1939) in 23S rRNA + S-adenosyl-L-homocysteine + H(+). Its function is as follows. Catalyzes the formation of 5-methyl-uridine at position 1939 (m5U1939) in 23S rRNA. This is 23S rRNA (uracil(1939)-C(5))-methyltransferase RlmD from Photobacterium profundum (strain SS9).